The following is a 478-amino-acid chain: Glycogen synthase (478 aa).

Residue lysine 20 participates in ADP-alpha-D-glucose binding.

It belongs to the glycosyltransferase 1 family. Bacterial/plant glycogen synthase subfamily.

The enzyme catalyses [(1-&gt;4)-alpha-D-glucosyl](n) + ADP-alpha-D-glucose = [(1-&gt;4)-alpha-D-glucosyl](n+1) + ADP + H(+). It functions in the pathway glycan biosynthesis; glycogen biosynthesis. Its function is as follows. Synthesizes alpha-1,4-glucan chains using ADP-glucose. In Cereibacter sphaeroides (strain ATCC 17025 / ATH 2.4.3) (Rhodobacter sphaeroides), this protein is Glycogen synthase.